Consider the following 684-residue polypeptide: Glycine--tRNA ligase beta subunit (684 aa).

Belongs to the class-II aminoacyl-tRNA synthetase family. Tetramer of two alpha and two beta subunits.

It localises to the cytoplasm. It catalyses the reaction tRNA(Gly) + glycine + ATP = glycyl-tRNA(Gly) + AMP + diphosphate. This Pseudomonas syringae pv. syringae (strain B728a) protein is Glycine--tRNA ligase beta subunit.